The primary structure comprises 511 residues: Limonoid UDP-glucosyltransferase (511 aa).

The active-site Proton acceptor is His-19. His-19 lines the an anthocyanidin pocket. The UDP-alpha-D-glucose site is built by Gln-344, His-359, Trp-362, Asn-363, Ser-364, and Glu-367. An an anthocyanidin-binding site is contributed by Gly-382. Residues Asp-383 and Gln-384 each coordinate UDP-alpha-D-glucose.

It belongs to the UDP-glycosyltransferase family.

The enzyme catalyses limonin + UDP-alpha-D-glucose + H2O = limonin 17-beta-D-glucoside + UDP + 2 H(+). Involved in the glucosylation of limonoids. This is Limonoid UDP-glucosyltransferase from Citrus unshiu (Satsuma mandarin).